The following is a 989-amino-acid chain: Phosphoenolpyruvate carboxylase (989 aa).

Active-site residues include H175 and K630.

The protein belongs to the PEPCase type 1 family. The cofactor is Mg(2+).

It catalyses the reaction oxaloacetate + phosphate = phosphoenolpyruvate + hydrogencarbonate. Its function is as follows. Forms oxaloacetate, a four-carbon dicarboxylic acid source for the tricarboxylic acid cycle. The sequence is that of Phosphoenolpyruvate carboxylase from Prochlorococcus marinus (strain MIT 9215).